The following is a 535-amino-acid chain: Cytochrome c oxidase subunit 1 (535 aa).

Residues 15-37 form a helical membrane-spanning segment; the sequence is IAILYFIFSTFCGLAGTAMSFII. Residues Glu-40, Ala-43, and Gly-45 each coordinate Ca(2+). The next 5 membrane-spanning stretches (helical) occupy residues 58–80, 147–169, 190–212, 238–260, and 267–289; these read VLVT…IGGF, LAIF…FIVT, ILIT…TMLL, WFFG…SHIV, and PVFG…FLVW. His-63 contributes to the Fe(II)-heme a binding site. His-242 is a Cu cation binding site. Positions 242-246 form a cross-link, 1'-histidyl-3'-tyrosine (His-Tyr); the sequence is HPEVY. Tyr-246 provides a ligand contact to O2. Cu cation is bound by residues His-291 and His-292. A run of 2 helical transmembrane segments spans residues 304-326 and 339-361; these read AYFT…SWLT and MLYT…VLAN. 2 residues coordinate Mg(2+): His-369 and Asp-370. 2 consecutive transmembrane segments (helical) span residues 376–398 and 415–437; these read THFH…YYWS and FWLI…INGM. His-377 lines the heme a3 pocket. Fe(II)-heme a is bound at residue His-379. A Ca(2+)-binding site is contributed by Pro-442. The helical transmembrane segment at 452–474 threads the bilayer; the sequence is NLVSSFGSMMTIMSLMLFTYIIY.

The protein belongs to the heme-copper respiratory oxidase family. As to quaternary structure, component of the cytochrome c oxidase (complex IV, CIV), a multisubunit enzyme composed of a catalytic core of 3 subunits and several supernumerary subunits. The complex exists as a monomer or a dimer and forms supercomplexes (SCs) in the inner mitochondrial membrane with ubiquinol-cytochrome c oxidoreductase (cytochrome b-c1 complex, complex III, CIII). It depends on heme as a cofactor. The cofactor is Cu cation.

It localises to the mitochondrion inner membrane. It carries out the reaction 4 Fe(II)-[cytochrome c] + O2 + 8 H(+)(in) = 4 Fe(III)-[cytochrome c] + 2 H2O + 4 H(+)(out). It participates in energy metabolism; oxidative phosphorylation. In terms of biological role, component of the cytochrome c oxidase, the last enzyme in the mitochondrial electron transport chain which drives oxidative phosphorylation. The respiratory chain contains 3 multisubunit complexes succinate dehydrogenase (complex II, CII), ubiquinol-cytochrome c oxidoreductase (cytochrome b-c1 complex, complex III, CIII) and cytochrome c oxidase (complex IV, CIV), that cooperate to transfer electrons derived from NADH and succinate to molecular oxygen, creating an electrochemical gradient over the inner membrane that drives transmembrane transport and the ATP synthase. Cytochrome c oxidase is the component of the respiratory chain that catalyzes the reduction of oxygen to water. Electrons originating from reduced cytochrome c in the intermembrane space (IMS) are transferred via the dinuclear copper A center (CU(A)) of subunit 2 and heme A of subunit 1 to the active site in subunit 1, a binuclear center (BNC) formed by heme A3 and copper B (CU(B)). The BNC reduces molecular oxygen to 2 water molecules using 4 electrons from cytochrome c in the IMS and 4 protons from the mitochondrial matrix. This Eremothecium gossypii (strain ATCC 10895 / CBS 109.51 / FGSC 9923 / NRRL Y-1056) (Yeast) protein is Cytochrome c oxidase subunit 1 (COX1).